The primary structure comprises 207 residues: Large ribosomal subunit protein uL4 (207 aa).

Residues 49-75 (HAVKNRSAVSGGGRKPWKQKGTGRARA) form a disordered region.

This sequence belongs to the universal ribosomal protein uL4 family. In terms of assembly, part of the 50S ribosomal subunit.

In terms of biological role, one of the primary rRNA binding proteins, this protein initially binds near the 5'-end of the 23S rRNA. It is important during the early stages of 50S assembly. It makes multiple contacts with different domains of the 23S rRNA in the assembled 50S subunit and ribosome. Functionally, forms part of the polypeptide exit tunnel. This chain is Large ribosomal subunit protein uL4, found in Leuconostoc mesenteroides subsp. mesenteroides (strain ATCC 8293 / DSM 20343 / BCRC 11652 / CCM 1803 / JCM 6124 / NCDO 523 / NBRC 100496 / NCIMB 8023 / NCTC 12954 / NRRL B-1118 / 37Y).